The following is a 216-amino-acid chain: DNA replication complex GINS protein PSF3 (216 aa).

A not essential for folding and stability of GINS complex, but may regulate accessibility to the central complex pore region spans residues 1–16; sequence MSEAYFPVESGALGPE.

Belongs to the GINS3/PSF3 family. Component of the GINS complex which is a heterotetramer of GINS1, GINS2, GINS3 and GINS4. Forms a stable subcomplex with GINS2. GINS complex interacts with DNA primase in vitro. Component of the CMG helicase complex, a hexameric ring of related MCM2-7 subunits stabilized by CDC45 and the tetrameric GINS complex.

The protein localises to the nucleus. It is found in the chromosome. Functionally, required for correct functioning of the GINS complex, a complex that plays an essential role in the initiation of DNA replication, and progression of DNA replication forks. GINS complex is a core component of CDC45-MCM-GINS (CMG) helicase, the molecular machine that unwinds template DNA during replication, and around which the replisome is built. In Mus musculus (Mouse), this protein is DNA replication complex GINS protein PSF3 (Gins3).